The chain runs to 273 residues: Kit ligand (273 aa).

The N-terminal stretch at Met1–Thr25 is a signal peptide. Topologically, residues Lys26–Gln214 are extracellular. 2 cysteine pairs are disulfide-bonded: Cys29–Cys114 and Cys68–Cys163. N-linked (GlcNAc...) asparagine glycans are attached at residues Asn90, Asn97, Asn145, and Asn195. Residues Ala190–Asp210 form a disordered region. Over residues Ser191–Arg202 the composition is skewed to low complexity. The chain crosses the membrane as a helical span at residues Trp215–Trp237. The Cytoplasmic segment spans residues Lys238–Val273.

It belongs to the SCF family. As to quaternary structure, homodimer, non-covalently linked. Heterotetramer with KIT, binding two KIT molecules; thereby mediates KIT dimerization and subsequent activation by autophosphorylation. A soluble form is produced by proteolytic processing of isoform 1 in the extracellular domain. Expressed in the cochlea.

The protein localises to the cell membrane. The protein resides in the cytoplasm. Its subcellular location is the cytoskeleton. It is found in the cell projection. It localises to the lamellipodium. The protein localises to the filopodium. The protein resides in the secreted. In terms of biological role, ligand for the receptor-type protein-tyrosine kinase KIT. Plays an essential role in the regulation of cell survival and proliferation, hematopoiesis, stem cell maintenance, gametogenesis, mast cell development, migration and function, and in melanogenesis. KITLG/SCF binding can activate several signaling pathways. Promotes phosphorylation of PIK3R1, the regulatory subunit of phosphatidylinositol 3-kinase, and subsequent activation of the kinase AKT1. KITLG/SCF and KIT also transmit signals via GRB2 and activation of RAS, RAF1 and the MAP kinases MAPK1/ERK2 and/or MAPK3/ERK1. KITLG/SCF and KIT promote activation of STAT family members STAT1, STAT3 and STAT5. KITLG/SCF and KIT promote activation of PLCG1, leading to the production of the cellular signaling molecules diacylglycerol and inositol 1,4,5-trisphosphate. KITLG/SCF acts synergistically with other cytokines, probably interleukins. This Mus musculus (Mouse) protein is Kit ligand (Kitlg).